A 439-amino-acid chain; its full sequence is C4-dicarboxylate transport protein (439 aa).

9 consecutive transmembrane segments (helical) span residues 9 to 29 (HLYF…YYLP), 45 to 65 (MIKM…IAGM), 80 to 100 (LYFE…INII), 150 to 170 (GEIL…SAMG), 186 to 206 (AFFG…FGAM), 221 to 241 (LGML…VVLG), 291 to 311 (VVGL…SIYL), 334 to 354 (ILGV…SGFV), and 357 to 377 (AATF…ILGI).

It belongs to the dicarboxylate/amino acid:cation symporter (DAACS) (TC 2.A.23) family.

The protein localises to the cell inner membrane. In terms of biological role, responsible for the transport of dicarboxylates such as succinate, fumarate, and malate from the periplasm across the membrane. This is C4-dicarboxylate transport protein from Geobacter sp. (strain M21).